Here is a 69-residue protein sequence, read N- to C-terminus: Small, acid-soluble spore protein I (69 aa).

This sequence belongs to the SspI family.

The protein localises to the spore core. This is Small, acid-soluble spore protein I from Bacillus cereus (strain G9842).